Reading from the N-terminus, the 462-residue chain is Indoleacetamide hydrolase (462 aa).

Catalysis depends on charge relay system residues Lys74 and Ser149. Ser173 (acyl-ester intermediate) is an active-site residue.

The protein belongs to the amidase family.

It participates in plant hormone metabolism; auxin biosynthesis. Its function is as follows. Hydrolyzes indole-3-acetamide (IAM) into indole-3-acetic acid (IAA). This is Indoleacetamide hydrolase (iaaH) from Allorhizobium ampelinum (strain ATCC BAA-846 / DSM 112012 / S4) (Agrobacterium vitis (strain S4)).